The following is a 264-amino-acid chain: uncharacterized protein (264 aa).

The signal sequence occupies residues 1 to 21 (MMWNYFVTCIVLYANIISIHT). The interval 182 to 247 (QQPNAAQVPT…AANNGLDLTS (66 aa)) is disordered. Over residues 190 to 213 (PTTSQQQPTSNTGGQQPPTNASNP) the composition is skewed to low complexity. Asparagine 209 carries an N-linked (GlcNAc...) asparagine glycan. A compositionally biased stretch (pro residues) spans 214-226 (PTNPQPTPTPAQP). A compositionally biased stretch (polar residues) spans 230–247 (GTQVQQTPAANNGLDLTS).

In terms of tissue distribution, component of the acid-insoluble and acid-soluble organic matrix of calcified layers of the shell (at protein level).

The protein localises to the secreted. This is an uncharacterized protein from Lottia gigantea (Giant owl limpet).